The following is a 38-amino-acid chain: Large ribosomal subunit protein bL36 (38 aa).

This sequence belongs to the bacterial ribosomal protein bL36 family.

The chain is Large ribosomal subunit protein bL36 from Proteus mirabilis (strain HI4320).